A 252-amino-acid polypeptide reads, in one-letter code: Chitooligosaccharide deacetylase (252 aa).

H61 and H125 together coordinate Mg(2+).

This sequence belongs to the YdjC deacetylase family. ChbG subfamily. Homodimer. It depends on Mg(2+) as a cofactor.

It is found in the cytoplasm. It carries out the reaction N,N'-diacetylchitobiose + H2O = N-acetyl-beta-D-glucosaminyl-(1-&gt;4)-D-glucosamine + acetate. The catalysed reaction is diacetylchitobiose-6'-phosphate + H2O = N'-monoacetylchitobiose-6'-phosphate + acetate. Its pathway is glycan degradation; chitin degradation. In terms of biological role, involved in the degradation of chitin. ChbG is essential for growth on the acetylated chitooligosaccharides chitobiose and chitotriose but is dispensable for growth on cellobiose and chitosan dimer, the deacetylated form of chitobiose. Deacetylation of chitobiose-6-P and chitotriose-6-P is necessary for both the activation of the chb promoter by the regulatory protein ChbR and the hydrolysis of phosphorylated beta-glucosides by the phospho-beta-glucosidase ChbF. Catalyzes the removal of only one acetyl group from chitobiose-6-P to yield monoacetylchitobiose-6-P, the inducer of ChbR and the substrate of ChbF. This Salmonella dublin (strain CT_02021853) protein is Chitooligosaccharide deacetylase.